Consider the following 230-residue polypeptide: Pyridoxal phosphate homeostasis protein (230 aa).

N6-(pyridoxal phosphate)lysine is present on Lys-36.

The protein belongs to the pyridoxal phosphate-binding protein YggS/PROSC family.

In terms of biological role, perhaps involved in proline biosynthesis. Functionally, pyridoxal 5'-phosphate (PLP)-binding protein, which is involved in PLP homeostasis. This chain is Pyridoxal phosphate homeostasis protein, found in Pseudomonas aeruginosa (strain ATCC 15692 / DSM 22644 / CIP 104116 / JCM 14847 / LMG 12228 / 1C / PRS 101 / PAO1).